The sequence spans 122 residues: Putative iron-sulfur cluster insertion protein ErpA (122 aa).

Iron-sulfur cluster contacts are provided by Cys50, Cys114, and Cys116.

Belongs to the HesB/IscA family. Homodimer. Iron-sulfur cluster is required as a cofactor.

Required for insertion of 4Fe-4S clusters. The polypeptide is Putative iron-sulfur cluster insertion protein ErpA (Bordetella petrii (strain ATCC BAA-461 / DSM 12804 / CCUG 43448)).